A 224-amino-acid polypeptide reads, in one-letter code: Dehydration-responsive element-binding protein 1G (224 aa).

Polar residues predominate over residues 1–16; sequence MDVSAALSSDYSSGTP. The tract at residues 1–46 is disordered; sequence MDVSAALSSDYSSGTPSPVAADADDGSSAYMTVSSAPPKRRAGRTK. The segment at residues 54–111 is a DNA-binding region (AP2/ERF); sequence VFKGVRRRNPGRWVCEVREPHGKQRIWLGTFETAEMAARAHDVAALALRGRAACLNFA.

Belongs to the AP2/ERF transcription factor family. ERF subfamily.

It localises to the nucleus. Functionally, transcriptional activator that binds specifically to the DNA sequence 5'-[AG]CCGAC-3'. Binding to the C-repeat/DRE element mediates high salinity- and dehydration-inducible transcription. The polypeptide is Dehydration-responsive element-binding protein 1G (DREB1G) (Oryza sativa subsp. indica (Rice)).